The primary structure comprises 345 residues: Dihydroorotate dehydrogenase (quinone) (345 aa).

FMN-binding positions include 65–69 and T89; that span reads AGLDK. K69 is a binding site for substrate. 114 to 118 contributes to the substrate binding site; sequence NRMGF. FMN is bound by residues N142 and N175. N175 provides a ligand contact to substrate. The active-site Nucleophile is the S178. N180 is a substrate binding site. Residues K220 and T248 each coordinate FMN. Substrate is bound at residue 249–250; sequence NT. FMN is bound by residues G271, G300, and 321 to 322; that span reads YT.

This sequence belongs to the dihydroorotate dehydrogenase family. Type 2 subfamily. As to quaternary structure, monomer. FMN is required as a cofactor.

Its subcellular location is the cell membrane. It catalyses the reaction (S)-dihydroorotate + a quinone = orotate + a quinol. It participates in pyrimidine metabolism; UMP biosynthesis via de novo pathway; orotate from (S)-dihydroorotate (quinone route): step 1/1. In terms of biological role, catalyzes the conversion of dihydroorotate to orotate with quinone as electron acceptor. The chain is Dihydroorotate dehydrogenase (quinone) from Burkholderia cenocepacia (strain HI2424).